The sequence spans 117 residues: Transcription elongation factor A protein-like 8 (117 aa).

A disordered region spans residues 1-81 (MQKSCDENEG…PEEVIRGVDE (81 aa)). Positions 41–81 (NVREETDGSLRGEPAEPSPEPKEDTPARHLNPEEVIRGVDE) are enriched in basic and acidic residues. Residues 73–100 (EEVIRGVDELERLREEIRRVRNKFVLMH) adopt a coiled-coil conformation.

This sequence belongs to the TFS-II family. TFA subfamily. In terms of tissue distribution, highly expressed in kidney. Moderately expressed in heart and lung. Low expression in brain and liver. Expression is up-regulated in nephrectomized kidney.

The protein resides in the nucleus. Functionally, may be involved in transcriptional regulation. This is Transcription elongation factor A protein-like 8 (Tceal8) from Rattus norvegicus (Rat).